Reading from the N-terminus, the 207-residue chain is Vexin (207 aa).

The segment at 55–102 (LELLPHRGDRRDPGDGRRFGRLQTARPPTAHPAKASARPVGISEPKTS) is disordered. The segment covering 58–72 (LPHRGDRRDPGDGRR) has biased composition (basic and acidic residues).

It belongs to the vexin family.

It is found in the cell membrane. The protein resides in the nucleus. Its function is as follows. Required for neurogenesis in the neural plate and retina. Strongly cooperates with neural bHLH factors to promote neurogenesis. The polypeptide is Vexin (Pongo abelii (Sumatran orangutan)).